The chain runs to 423 residues: Lipase member M (423 aa).

The first 33 residues, 1 to 33 (MLETLSRQWIVSHRMEMWLLILVAYMFQRNVNS), serve as a signal peptide directing secretion. N48 is a glycosylation site (N-linked (GlcNAc...) asparagine). Residues 92–392 (PVVLLQHGLV…EWAHVDFIWG (301 aa)) enclose the AB hydrolase-1 domain. S186 acts as the Nucleophile in catalysis. C260 and C269 form a disulfide bridge. Residues D357 and H386 each act as charge relay system in the active site.

Belongs to the AB hydrolase superfamily. Lipase family. As to expression, exclusively expressed in the epidermis within the granular keratinocytes.

It is found in the secreted. Its function is as follows. Plays a highly specific role in the last step of keratinocyte differentiation. May have an essential function in lipid metabolism of the most differentiated epidermal layers. This chain is Lipase member M (LIPM), found in Homo sapiens (Human).